The following is a 1701-amino-acid chain: Merozoite surface protein 1 (1701 aa).

A signal peptide spans 1-19 (MKIIFFLCSFLFFIINTQC). Gly residues predominate over residues 89-100 (GSGGSVASGGSG). The tract at residues 89 to 118 (GSGGSVASGGSGNSRRTNPSDNSSDSNTKT) is disordered. The span at 101–116 (NSRRTNPSDNSSDSNT) shows a compositional bias: low complexity. Asn110 and Asn239 each carry an N-linked (GlcNAc...) asparagine glycan. Positions 322-344 (DAENPTTGSKPNPLPENKKKEVE) are disordered. Asn470, Asn536, and Asn607 each carry an N-linked (GlcNAc...) asparagine glycan. Residues 704 to 739 (SETTEDGGHSTHTLSQSGETEVTEETEVTEETVGHT) are disordered. The segment covering 724–733 (EVTEETEVTE) has biased composition (acidic residues). N-linked (GlcNAc...) asparagine glycans are attached at residues Asn802, Asn899, Asn919, Asn965, Asn991, Asn1089, and Asn1196. Positions 889–927 (TGTSSTSSPGNTTVNTAQSATHSNSQNQQSNASSTNTQN) are enriched in low complexity. Positions 889-936 (TGTSSTSSPGNTTVNTAQSATHSNSQNQQSNASSTNTQNGVAVSSGPA) are disordered. Disordered regions lie at residues 1231–1259 (PPQPDVTPSPLSVRVSGSSGSTKEETQIP) and 1451–1472 (KEKFPSSPPTTPPSPAKTDEQK). The segment covering 1245–1259 (VSGSSGSTKEETQIP) has biased composition (polar residues). Positions 1456–1465 (SSPPTTPPSP) are enriched in pro residues. A glycan (N-linked (GlcNAc...) asparagine) is linked at Asn1588. EGF-like domains lie at 1592-1632 (HQCV…VENP) and 1633-1680 (NPTC…IFCS). Disulfide bonds link Cys1594–Cys1605, Cys1599–Cys1615, Cys1617–Cys1628, Cys1636–Cys1649, Cys1643–Cys1663, and Cys1665–Cys1679. Residue Ser1680 is the site of GPI-anchor amidated serine attachment. Positions 1681 to 1701 (SSNFLGISFLLILMLILYSFI) are cleaved as a propeptide — removed in mature form.

In terms of assembly, forms a complex composed of subunits p83, p30, p38, and p42 which remain non-covalently associated; the complex is formed at the merozoite surface prior to egress from host erythrocytes. Forms a complex composed of processed MSP1 subunits, MSP6 subunit p36 and MSP7; the complex is formed at the merozoite surface prior to egress from host erythrocytes. Within the complex, interacts (via subunit p38) with MSP6 subunit p36 and (via subunits p83, p30 and p38) with MSP7 (via subunit p22). Forms a complex composed of MSP1, MSP6, DBLMSP1 and DBLMSP2. Within the complex, interacts (via subunit p38) with DBLMSP1 and DBLMSP2. Forms a complex composed of MSP1, and rhoptry proteins RhopH3, RAP1 and CLAG9/RhopH3. Within the complex, interacts (via subunits p42 and p19) with RhopH3 (via C-terminus). Forms a complex composed of MSP1, MSP6, MSP7, MSP9 and MSP3; within the complex, MSP6 and MSP9 mediate the binding to the host erythrocyte. Interacts (via subunits p19 and p42) with MSP9; the interaction is direct; MSP1 subunits p19 or p42, and MSP9 form a co-ligand complex that interacts with host SLC4A1/Band 3 protein. May interact with PFD6. Interacts with host spectrin. As to quaternary structure, interacts with host glycophorin GYPA in a sialic acid-independent manner. Interacts with host proinflammatory cytokine S100P; the interaction blocks S100P inflammatory and chemotactic activities. In terms of assembly, interacts with host SLC4A1/Band 3 (via 5ABC region) on the host erythrocyte surface in a sialic acid-independent manner. Post-translationally, the p190 precursor is cleaved by SUB1 prior to merozoite egress into 4 subunits p83, p30, p38, and p42 which remain non-covalently associated. SUB1-mediated proteolytic cleavage occurs in an orderly manner; the first cleavage occurs at the p30/p38 site, followed by cleavage at the p83/p30 site, in the 3D7 strain a second cleavage occurs at the N-terminus of p83, the last cleavage occurs at the p38/p42 site. The order of cleavage is essential for parasite viability. SUB1-mediated processing is essential for merozoite egress. In a second processing step during erythrocyte invasion, p42 is cleaved by SUB2 into p33 and p19; the latter remains attached to the merozoite surface via its GPI-anchor and is endocytosed during the subsequent ring stage.

It is found in the cell membrane. The protein localises to the secreted. It localises to the vacuole membrane. Functionally, during the asexual blood stage, involved in merozoite egress from host erythrocytes possibly via its interaction with the host cytoskeleton protein spectrin resulting in the destabilization of the host cytoskeleton and thus leading to erythrocyte cell membrane rupture. Involved in the binding to host erythrocytes and is required for host erythrocyte invasion. By binding to host proinflammatory cytokine S100P may interfere with host immune responses. In terms of biological role, involved in merozoite invasion of host erythrocytes. May play a role in the biogenesis and/or function of the food vacuole during the intraerythrocytic development. This chain is Merozoite surface protein 1, found in Plasmodium falciparum (isolate FC27 / Papua New Guinea).